The following is a 56-amino-acid chain: Small ribosomal subunit protein uS14 (56 aa).

Cys21, Cys24, Cys39, and Cys42 together coordinate Zn(2+).

It belongs to the universal ribosomal protein uS14 family. Zinc-binding uS14 subfamily. Part of the 30S ribosomal subunit. The cofactor is Zn(2+).

Functionally, binds 16S rRNA, required for the assembly of 30S particles. This Pyrococcus abyssi (strain GE5 / Orsay) protein is Small ribosomal subunit protein uS14.